A 427-amino-acid chain; its full sequence is Gamma-glutamyl phosphate reductase (427 aa).

This sequence belongs to the gamma-glutamyl phosphate reductase family.

Its subcellular location is the cytoplasm. It carries out the reaction L-glutamate 5-semialdehyde + phosphate + NADP(+) = L-glutamyl 5-phosphate + NADPH + H(+). It functions in the pathway amino-acid biosynthesis; L-proline biosynthesis; L-glutamate 5-semialdehyde from L-glutamate: step 2/2. Catalyzes the NADPH-dependent reduction of L-glutamate 5-phosphate into L-glutamate 5-semialdehyde and phosphate. The product spontaneously undergoes cyclization to form 1-pyrroline-5-carboxylate. The chain is Gamma-glutamyl phosphate reductase from Allorhizobium ampelinum (strain ATCC BAA-846 / DSM 112012 / S4) (Agrobacterium vitis (strain S4)).